Consider the following 526-residue polypeptide: Cholesterol side-chain cleavage enzyme, mitochondrial (526 aa).

The transit peptide at 1-36 (MLAKGLCLRSVLVKSCQPFLSPVWQGPGLATGNGAG) directs the protein to the mitochondrion. Cysteine 459 serves as a coordination point for heme.

Belongs to the cytochrome P450 family. As to quaternary structure, interacts with FDX1/adrenodoxin. The cofactor is heme. Expressed in the kidney where it localizes to the distal convoluted tubule and the thick ascending limb of the loop of Henle (at protein level). In the ovary, highly expressed in interstitial cells (at protein level). Also expressed in adrenal gland and testis.

The protein localises to the mitochondrion inner membrane. The enzyme catalyses 6 reduced [adrenodoxin] + cholesterol + 3 O2 + 6 H(+) = 4-methylpentanal + pregnenolone + 6 oxidized [adrenodoxin] + 4 H2O. It carries out the reaction 2 reduced [adrenodoxin] + cholesterol + O2 + 2 H(+) = (22R)-hydroxycholesterol + 2 oxidized [adrenodoxin] + H2O. It catalyses the reaction (22R)-hydroxycholesterol + 2 reduced [adrenodoxin] + O2 + 2 H(+) = (20R,22R)-20,22-dihydroxycholesterol + 2 oxidized [adrenodoxin] + H2O. The catalysed reaction is (20R,22R)-20,22-dihydroxycholesterol + 2 reduced [adrenodoxin] + O2 + 2 H(+) = 4-methylpentanal + pregnenolone + 2 oxidized [adrenodoxin] + 2 H2O. It functions in the pathway lipid metabolism; C21-steroid hormone metabolism. The protein operates within steroid metabolism; cholesterol metabolism. A cytochrome P450 monooxygenase that catalyzes the side-chain hydroxylation and cleavage of cholesterol to pregnenolone, the precursor of most steroid hormones. Catalyzes three sequential oxidation reactions of cholesterol, namely the hydroxylation at C22 followed with the hydroxylation at C20 to yield 20R,22R-hydroxycholesterol that is further cleaved between C20 and C22 to yield the C21-steroid pregnenolone and 4-methylpentanal. Mechanistically, uses molecular oxygen inserting one oxygen atom into a substrate and reducing the second into a water molecule. Two electrons are provided by NADPH via a two-protein mitochondrial transfer system comprising flavoprotein FDXR (adrenodoxin/ferredoxin reductase) and nonheme iron-sulfur protein FDX1 or FDX2 (adrenodoxin/ferredoxin). The protein is Cholesterol side-chain cleavage enzyme, mitochondrial of Rattus norvegicus (Rat).